A 70-amino-acid chain; its full sequence is uncharacterized protein (70 aa).

The helical transmembrane segment at 15 to 37 (IFAFLLFRLCKFCCVFCCALCNV) threads the bilayer.

The protein resides in the membrane. This is an uncharacterized protein from Dictyostelium discoideum (Social amoeba).